A 120-amino-acid polypeptide reads, in one-letter code: MRHYEIVLLIHPDQSEQVPAMLERYKGMITAGGGKVHREEDWGRRQLAYMINKLAKAHYLCLNIEADQAVMAELEHAFKFNDAVLRHLTVQKKKADTAPSSMMKTVEREEARKASQTEQA.

The disordered stretch occupies residues 93–120 (KKADTAPSSMMKTVEREEARKASQTEQA). A compositionally biased stretch (basic and acidic residues) spans 105 to 120 (TVEREEARKASQTEQA).

It belongs to the bacterial ribosomal protein bS6 family.

Binds together with bS18 to 16S ribosomal RNA. This chain is Small ribosomal subunit protein bS6, found in Delftia acidovorans (strain DSM 14801 / SPH-1).